The sequence spans 174 residues: NADH-ubiquinone oxidoreductase chain 6 (174 aa).

6 helical membrane passes run 1–21 (MTYA…GFSS), 24–44 (SPIY…AIIL), 47–67 (GGGY…MVVF), 86–106 (VEVL…VLWV), 111–131 (GMVV…EGEG), and 151–171 (WLVV…IEIA).

It belongs to the complex I subunit 6 family. As to quaternary structure, core subunit of respiratory chain NADH dehydrogenase (Complex I) which is composed of 45 different subunits.

The protein resides in the mitochondrion inner membrane. It carries out the reaction a ubiquinone + NADH + 5 H(+)(in) = a ubiquinol + NAD(+) + 4 H(+)(out). Core subunit of the mitochondrial membrane respiratory chain NADH dehydrogenase (Complex I) which catalyzes electron transfer from NADH through the respiratory chain, using ubiquinone as an electron acceptor. Essential for the catalytic activity and assembly of complex I. In Pan troglodytes (Chimpanzee), this protein is NADH-ubiquinone oxidoreductase chain 6 (MT-ND6).